We begin with the raw amino-acid sequence, 661 residues long: Transketolase (661 aa).

Residue His28 participates in substrate binding. Residues His68 and 116-118 contribute to the thiamine diphosphate site; that span reads GPL. A Mg(2+)-binding site is contributed by Glu157. Gly158 and Asn187 together coordinate thiamine diphosphate. Asn187 and Ile189 together coordinate Mg(2+). Substrate contacts are provided by His261 and Arg358. Residue His261 coordinates thiamine diphosphate. Glu412 acts as the Proton donor in catalysis. Phe438 lines the thiamine diphosphate pocket. His462, Asp470, and Arg521 together coordinate substrate.

This sequence belongs to the transketolase family. As to quaternary structure, homodimer. Mg(2+) serves as cofactor. Ca(2+) is required as a cofactor. The cofactor is Mn(2+). Requires Co(2+) as cofactor. It depends on thiamine diphosphate as a cofactor.

The enzyme catalyses D-sedoheptulose 7-phosphate + D-glyceraldehyde 3-phosphate = aldehydo-D-ribose 5-phosphate + D-xylulose 5-phosphate. Its function is as follows. Catalyzes the transfer of a two-carbon ketol group from a ketose donor to an aldose acceptor, via a covalent intermediate with the cofactor thiamine pyrophosphate. This Treponema pallidum (strain Nichols) protein is Transketolase (tkt).